The chain runs to 294 residues: MKQLTLAKTVKGVGIGLHKGEPIEITLEPLEANSGIVFFRSDLNASYKASPENVINTQMATVLGDDRGFISTIEHLMSAINAYGIDNVRIVLNANEAPVMDGSSISFCMMLDEAGVKELDAPKKIMVIKKPVEVRDGNKFVRLTPTKEPRINYTIKFDNAVIGEQSYNFEFSKKNYIENIARARTFGFLKDVQALRSMNLALGGSLENTIVVDENRILNPEGLRFKDEFVRHKILDAIGDLTLLGYRVFGDYISYAGSHHLNHLLTKEVLKDKDAYEIVSLEKTTQKAYEKVFA.

Residues H75, H232, and D236 each coordinate Zn(2+). The Proton donor role is filled by H259.

It belongs to the LpxC family. Zn(2+) serves as cofactor.

The catalysed reaction is a UDP-3-O-[(3R)-3-hydroxyacyl]-N-acetyl-alpha-D-glucosamine + H2O = a UDP-3-O-[(3R)-3-hydroxyacyl]-alpha-D-glucosamine + acetate. It participates in glycolipid biosynthesis; lipid IV(A) biosynthesis; lipid IV(A) from (3R)-3-hydroxytetradecanoyl-[acyl-carrier-protein] and UDP-N-acetyl-alpha-D-glucosamine: step 2/6. Catalyzes the hydrolysis of UDP-3-O-myristoyl-N-acetylglucosamine to form UDP-3-O-myristoylglucosamine and acetate, the committed step in lipid A biosynthesis. The protein is UDP-3-O-acyl-N-acetylglucosamine deacetylase of Campylobacter jejuni subsp. jejuni serotype O:6 (strain 81116 / NCTC 11828).